The following is a 634-amino-acid chain: DNA-directed RNA polymerase subunit gamma (634 aa).

Residues Cys-74, Cys-76, Cys-89, and Cys-92 each contribute to the Zn(2+) site. Residues Asp-471, Asp-473, and Asp-475 each contribute to the Mg(2+) site.

Belongs to the RNA polymerase beta' chain family. RpoC1 subfamily. In cyanobacteria the RNAP catalytic core is composed of 2 alpha, 1 beta, 1 beta', 1 gamma and 1 omega subunit. When a sigma factor is associated with the core the holoenzyme is formed, which can initiate transcription. It depends on Mg(2+) as a cofactor. Zn(2+) serves as cofactor.

The enzyme catalyses RNA(n) + a ribonucleoside 5'-triphosphate = RNA(n+1) + diphosphate. DNA-dependent RNA polymerase catalyzes the transcription of DNA into RNA using the four ribonucleoside triphosphates as substrates. The sequence is that of DNA-directed RNA polymerase subunit gamma from Prochlorococcus marinus (strain SARG / CCMP1375 / SS120).